A 206-amino-acid polypeptide reads, in one-letter code: Ribonuclease HII (206 aa).

Positions 27–206 (ARIAGVDEAG…CALHRRSFKH (180 aa)) constitute an RNase H type-2 domain. A divalent metal cation contacts are provided by aspartate 33, glutamate 34, and aspartate 125.

This sequence belongs to the RNase HII family. The cofactor is Mn(2+). It depends on Mg(2+) as a cofactor.

It is found in the cytoplasm. The catalysed reaction is Endonucleolytic cleavage to 5'-phosphomonoester.. In terms of biological role, endonuclease that specifically degrades the RNA of RNA-DNA hybrids. The chain is Ribonuclease HII from Moorella thermoacetica (strain ATCC 39073 / JCM 9320).